The sequence spans 400 residues: NAD-dependent protein deacetylase sirtuin-7 (400 aa).

A disordered region spans residues 1–27 (MAAGGLSRSERKAAERVRRLREEQQRE). Residues 8–27 (RSERKAAERVRRLREEQQRE) show a composition bias toward basic and acidic residues. Positions 82–329 (PEELRGKVRE…RLLMAELGLE (248 aa)) constitute a Deacetylase sirtuin-type domain. NAD(+) contacts are provided by residues 107 to 126 (GAGI…NGVW) and 167 to 170 (QNCD). His-187 (proton acceptor) is an active-site residue. The Zn(2+) site is built by Cys-195, Cys-198, Cys-225, and Cys-228. Residues 268–270 (GSS), 297–299 (NLQ), and Cys-315 contribute to the NAD(+) site. The segment at 354–380 (SHSRKSLCRSREEAPPGDRGAPLSSAP) is disordered. Arg-388 carries the post-translational modification Asymmetric dimethylarginine; alternate. Arg-388 is subject to Omega-N-methylarginine; alternate.

Belongs to the sirtuin family. Class IV subfamily. Interacts with UBTF and the RNA polymerase I complex. Interacts with components of the B-WICH complex, such as MYBBP1A, SMARCA5/SNF2H and BAZ1B/WSTF. Interacts with ELK4, leading to stabilization at target promoters for H3K18Ac deacetylation. Interacts with histone H2A and/or histone H2B. Interacts with DNMT1. Interacts with SIRT1. Zn(2+) is required as a cofactor. Phosphorylated during mitosis. Post-translationally, methylation at Arg-388 by PRMT6 inhibits the H3K18Ac histone deacetylase activity, promoting mitochondria biogenesis and maintaining mitochondria respiration. In terms of processing, ubiquitinated via 'Lys-63'-linked ubiquitin chains. Deubiquitinated by USP7, inhibiting the H3K18Ac histone deacetylase activity and regulating gluconeogenesis. Ubiquitinated by E3 ubiquitin-protein ligase complex containing FBXO7; leading to proteasomal degradation.

It localises to the nucleus. Its subcellular location is the nucleolus. The protein localises to the nucleoplasm. It is found in the chromosome. The protein resides in the cytoplasm. The enzyme catalyses N(6)-acetyl-L-lysyl-[protein] + NAD(+) + H2O = 2''-O-acetyl-ADP-D-ribose + nicotinamide + L-lysyl-[protein]. It catalyses the reaction N(6)-glutaryl-L-lysyl-[protein] + NAD(+) + H2O = 2''-O-glutaryl-ADP-D-ribose + nicotinamide + L-lysyl-[protein]. The catalysed reaction is N(6)-succinyl-L-lysyl-[protein] + NAD(+) + H2O = 2''-O-succinyl-ADP-D-ribose + nicotinamide + L-lysyl-[protein]. It carries out the reaction N(6)-propanoyl-L-lysyl-[protein] + NAD(+) + H2O = 3''-O-propanoyl-ADP-D-ribose + nicotinamide + L-lysyl-[protein]. The enzyme catalyses N(6)-decanoyl-L-lysyl-[protein] + NAD(+) + H2O = 2''-O-decanoyl-ADP-D-ribose + nicotinamide + L-lysyl-[protein]. NAD-dependent protein-lysine deacetylase and deacylase activities are activated by nucleic acids. Histone deacetylase activity is activated by DNA and nucleosomes. Protein-lysine deacylase activity is activated by RNA. H3K18Ac histone deacetylase activity is inhibited by methylation at Arg-388. H3K18Ac histone deacetylase activity is inhibited by deubiquitination by USP7. In terms of biological role, NAD-dependent protein-lysine deacylase that can act both as a deacetylase or deacylase (desuccinylase, depropionylase, deglutarylase and dedecanoylase), depending on the context. Specifically mediates deacetylation of histone H3 at 'Lys-18' (H3K18Ac). In contrast to other histone deacetylases, displays strong preference for a specific histone mark, H3K18Ac, directly linked to control of gene expression. H3K18Ac is mainly present around the transcription start site of genes and has been linked to activation of nuclear hormone receptors; SIRT7 thereby acts as a transcription repressor. Moreover, H3K18 hypoacetylation has been reported as a marker of malignancy in various cancers and seems to maintain the transformed phenotype of cancer cells. Also able to mediate deacetylation of histone H3 at 'Lys-36' (H3K36Ac) in the context of nucleosomes. Also mediates deacetylation of non-histone proteins, such as ATM, CDK9, DDX21, DDB1, FBL, FKBP5/FKBP51, GABPB1, RAN, RRP9/U3-55K and POLR1E/PAF53. Enriched in nucleolus where it stimulates transcription activity of the RNA polymerase I complex. Acts by mediating the deacetylation of the RNA polymerase I subunit POLR1E/PAF53, thereby promoting the association of RNA polymerase I with the rDNA promoter region and coding region. In response to metabolic stress, SIRT7 is released from nucleoli leading to hyperacetylation of POLR1E/PAF53 and decreased RNA polymerase I transcription. Required to restore the transcription of ribosomal RNA (rRNA) at the exit from mitosis. Promotes pre-ribosomal RNA (pre-rRNA) cleavage at the 5'-terminal processing site by mediating deacetylation of RRP9/U3-55K, a core subunit of the U3 snoRNP complex. Mediates 'Lys-37' deacetylation of Ran, thereby regulating the nuclear export of NF-kappa-B subunit RELA/p65. Acts as a regulator of DNA damage repair by mediating deacetylation of ATM during the late stages of DNA damage response, promoting ATM dephosphorylation and deactivation. Suppresses the activity of the DCX (DDB1-CUL4-X-box) E3 ubiquitin-protein ligase complexes by mediating deacetylation of DDB1, which prevents the interaction between DDB1 and CUL4 (CUL4A or CUL4B). Activates RNA polymerase II transcription by mediating deacetylation of CDK9, thereby promoting 'Ser-2' phosphorylation of the C-terminal domain (CTD) of RNA polymerase II. Deacetylates FBL, promoting histone-glutamine methyltransferase activity of FBL. Acts as a regulator of mitochondrial function by catalyzing deacetylation of GABPB1. Regulates Akt/AKT1 activity by mediating deacetylation of FKBP5/FKBP51. Required to prevent R-loop-associated DNA damage and transcription-associated genomic instability by mediating deacetylation and subsequent activation of DDX21, thereby overcoming R-loop-mediated stalling of RNA polymerases. In addition to protein deacetylase activity, also acts as a protein-lysine deacylase. Acts as a protein depropionylase by mediating depropionylation of Osterix (SP7), thereby regulating bone formation by osteoblasts. Acts as a histone deglutarylase by mediating deglutarylation of histone H4 on 'Lys-91' (H4K91glu); a mark that destabilizes nucleosomes by promoting dissociation of the H2A-H2B dimers from nucleosomes. Acts as a histone desuccinylase: in response to DNA damage, recruited to DNA double-strand breaks (DSBs) and catalyzes desuccinylation of histone H3 on 'Lys-122' (H3K122succ), thereby promoting chromatin condensation and DSB repair. Also promotes DSB repair by promoting H3K18Ac deacetylation, regulating non-homologous end joining (NHEJ). Along with its role in DNA repair, required for chromosome synapsis during prophase I of female meiosis by catalyzing H3K18Ac deacetylation. Involved in transcriptional repression of LINE-1 retrotransposon via H3K18Ac deacetylation, and promotes their association with the nuclear lamina. Required to stabilize ribosomal DNA (rDNA) heterochromatin and prevent cellular senescence induced by rDNA instability. Acts as a negative regulator of SIRT1 by preventing autodeacetylation of SIRT1, restricting SIRT1 deacetylase activity. In Homo sapiens (Human), this protein is NAD-dependent protein deacetylase sirtuin-7.